The following is a 469-amino-acid chain: Acetyl-CoA decarbonylase/synthase complex subunit beta 1 (469 aa).

The [Ni-Fe-S] cluster site is built by Cys-189, Cys-192, Cys-278, and Cys-280.

It belongs to the CdhC family. In terms of assembly, monomer. The ACDS complex is made up of alpha, epsilon, beta, gamma and delta chains with a probable stoichiometry of (alpha(2)epsilon(2))(4)-beta(8)-(gamma(1)delta(1))(8) (Potential). [Ni-Fe-S] cluster is required as a cofactor.

It catalyses the reaction Co(I)-[corrinoid Fe-S protein] + acetyl-CoA + H(+) = methyl-Co(III)-[corrinoid Fe-S protein] + CO + CoA. It functions in the pathway one-carbon metabolism; methanogenesis from acetate. Its function is as follows. Part of a complex that catalyzes the reversible cleavage of acetyl-CoA, allowing growth on acetate as sole source of carbon and energy. The alpha-epsilon complex generates CO from CO(2), while the beta subunit (this protein) combines the CO with CoA and a methyl group to form acetyl-CoA. The methyl group, which is incorporated into acetyl-CoA, is transferred to the beta subunit by a corrinoid iron-sulfur protein (the gamma-delta complex). The polypeptide is Acetyl-CoA decarbonylase/synthase complex subunit beta 1 (cdhC1) (Methanosarcina thermophila).